The following is a 165-amino-acid chain: Polcalcin Cup a 4 (165 aa).

EF-hand domains are found at residues 22–57 (QSVH…MGSE), 58–86 (VDEA…FVDL), 91–126 (ATVK…VGEP), and 127–162 (CTIE…EMTD). The Ca(2+) site is built by D35, N37, D39, K41, E46, D71, D73, D75, Y77, E82, D104, D106, N108, T110, E115, D140, N142, D144, and E151.

In terms of assembly, may exist as monomer and dimer. Expressed in mature pollen grains.

This chain is Polcalcin Cup a 4, found in Hesperocyparis arizonica (Arizona cypress).